Reading from the N-terminus, the 614-residue chain is 2-succinyl-5-enolpyruvyl-6-hydroxy-3-cyclohexene-1-carboxylate synthase (614 aa).

Belongs to the TPP enzyme family. MenD subfamily. As to quaternary structure, homodimer. Requires Mg(2+) as cofactor. It depends on Mn(2+) as a cofactor. Thiamine diphosphate is required as a cofactor.

It carries out the reaction isochorismate + 2-oxoglutarate + H(+) = 5-enolpyruvoyl-6-hydroxy-2-succinyl-cyclohex-3-ene-1-carboxylate + CO2. It functions in the pathway quinol/quinone metabolism; 1,4-dihydroxy-2-naphthoate biosynthesis; 1,4-dihydroxy-2-naphthoate from chorismate: step 2/7. The protein operates within quinol/quinone metabolism; menaquinone biosynthesis. Catalyzes the thiamine diphosphate-dependent decarboxylation of 2-oxoglutarate and the subsequent addition of the resulting succinic semialdehyde-thiamine pyrophosphate anion to isochorismate to yield 2-succinyl-5-enolpyruvyl-6-hydroxy-3-cyclohexene-1-carboxylate (SEPHCHC). The sequence is that of 2-succinyl-5-enolpyruvyl-6-hydroxy-3-cyclohexene-1-carboxylate synthase from Sorangium cellulosum (strain So ce56) (Polyangium cellulosum (strain So ce56)).